The primary structure comprises 300 residues: Ribosomal protein L11 methyltransferase (300 aa).

S-adenosyl-L-methionine contacts are provided by Thr-152, Gly-173, Asp-195, and Asn-234.

Belongs to the methyltransferase superfamily. PrmA family.

It localises to the cytoplasm. It carries out the reaction L-lysyl-[protein] + 3 S-adenosyl-L-methionine = N(6),N(6),N(6)-trimethyl-L-lysyl-[protein] + 3 S-adenosyl-L-homocysteine + 3 H(+). Its function is as follows. Methylates ribosomal protein L11. The chain is Ribosomal protein L11 methyltransferase from Burkholderia pseudomallei (strain 1710b).